The following is a 606-amino-acid chain: Probable glutamine--fructose-6-phosphate aminotransferase [isomerizing] (606 aa).

Cysteine 2 acts as the For GATase activity in catalysis. One can recognise a Glutamine amidotransferase type-2 domain in the interval 2-224; that stretch reads CGISACLNHT…DNDYGYITNN (223 aa). SIS domains lie at 282-427 and 458-596; these read FFPE…SLDN and LLEF…PDYP.

It catalyses the reaction D-fructose 6-phosphate + L-glutamine = D-glucosamine 6-phosphate + L-glutamate. It participates in nucleotide-sugar biosynthesis; UDP-N-acetyl-alpha-D-glucosamine biosynthesis; alpha-D-glucosamine 6-phosphate from D-fructose 6-phosphate: step 1/1. Controls the flux of glucose into the hexosamine pathway. Most likely involved in regulating the availability of precursors for glycosylation of proteins (Potential). This chain is Probable glutamine--fructose-6-phosphate aminotransferase [isomerizing], found in Acanthamoeba polyphaga (Amoeba).